Consider the following 469-residue polypeptide: UDP-N-acetylmuramate--L-alanine ligase (469 aa).

ATP is bound at residue 114-120 (GTHGKTT).

The protein belongs to the MurCDEF family.

The protein resides in the cytoplasm. It catalyses the reaction UDP-N-acetyl-alpha-D-muramate + L-alanine + ATP = UDP-N-acetyl-alpha-D-muramoyl-L-alanine + ADP + phosphate + H(+). It participates in cell wall biogenesis; peptidoglycan biosynthesis. Functionally, cell wall formation. The polypeptide is UDP-N-acetylmuramate--L-alanine ligase (Chlorobium phaeovibrioides (strain DSM 265 / 1930) (Prosthecochloris vibrioformis (strain DSM 265))).